A 248-amino-acid chain; its full sequence is Adenosylcobinamide-GDP ribazoletransferase (248 aa).

The next 6 membrane-spanning stretches (helical) occupy residues 36–56 (FFLP…YLGL), 59–79 (FLPS…ITGG), 114–134 (GTIA…SLVL), 137–157 (YSIA…FLCL), 170–190 (IFIG…VLVL), and 199–219 (ATII…LLCL).

It belongs to the CobS family. It depends on Mg(2+) as a cofactor.

It is found in the cell membrane. It carries out the reaction alpha-ribazole + adenosylcob(III)inamide-GDP = adenosylcob(III)alamin + GMP + H(+). The catalysed reaction is alpha-ribazole 5'-phosphate + adenosylcob(III)inamide-GDP = adenosylcob(III)alamin 5'-phosphate + GMP + H(+). It participates in cofactor biosynthesis; adenosylcobalamin biosynthesis; adenosylcobalamin from cob(II)yrinate a,c-diamide: step 7/7. In terms of biological role, joins adenosylcobinamide-GDP and alpha-ribazole to generate adenosylcobalamin (Ado-cobalamin). Also synthesizes adenosylcobalamin 5'-phosphate from adenosylcobinamide-GDP and alpha-ribazole 5'-phosphate. The chain is Adenosylcobinamide-GDP ribazoletransferase from Clostridium botulinum (strain Loch Maree / Type A3).